Here is a 118-residue protein sequence, read N- to C-terminus: Galanin peptides (118 aa).

Positions 1–19 (MHRCVGGVCVSLIVCAFLT) are cleaved as a signal peptide. Positions 20-30 (ETLGMVIAAKE) are excised as a propeptide. A61 carries the post-translational modification Alanine amide.

Belongs to the galanin family. Strongly expressed in brain and stomach, moderately in the eye, and very weakly in heart, kidney and gills. Not detected in liver.

It localises to the secreted. In terms of biological role, endocrine hormone of the central and peripheral nervous systems that binds and activates the G protein-coupled receptors GALR1 (galr1a and galr1b) and GALR2 (galr2a and galr2b). This small neuropeptide may regulate diverse physiologic functions including contraction of smooth muscle of the gastrointestinal and genitourinary tract, growth hormone and insulin release and adrenal secretion. In Danio rerio (Zebrafish), this protein is Galanin peptides.